The primary structure comprises 225 residues: Nucleolar protein 6 (225 aa).

Residues 1–75 form a disordered region; sequence MGSEEDKKLT…GGKGKNGKKG (75 aa). The span at 9–20 shows a compositional bias: basic residues; it reads LTKKQLKAQQFR. A compositionally biased stretch (basic and acidic residues) spans 21 to 42; that stretch reads KSKEEKDQEKDVKKEQAPEGKR. Phosphoserine is present on serine 45. The span at 56–75 shows a compositional bias: basic residues; the sequence is KKKRKTRRGRGGKGKNGKKG. The RRM domain occupies 78–155; sequence FIVFVGSLPR…KKINVELTVG (78 aa). Serine 160 carries the phosphoserine modification. The segment at 187 to 225 is disordered; the sequence is NDGNQKKIAKTTATAAQTSGTDNKPVPAGIHPDRAKLLK.

Belongs to the RRM NOP6 family.

The protein resides in the nucleus. Its subcellular location is the nucleolus. In terms of biological role, predicted to be involved in rRNA processing. The sequence is that of Nucleolar protein 6 (NOP6) from Saccharomyces cerevisiae (strain ATCC 204508 / S288c) (Baker's yeast).